We begin with the raw amino-acid sequence, 957 residues long: Valine--tRNA ligase (957 aa).

Positions 45–55 match the 'HIGH' region motif; the sequence is PNVTGSLHMGH. Residues 571–575 carry the 'KMSKS' region motif; it reads KMSKS. Position 574 (lysine 574) interacts with ATP. A coiled-coil region spans residues 887-946; it reads VVDFAAEQARLEKELGKAEADIKRAEAKLANEKFVANAAEEVVEEEREKREAAVARKVKI.

This sequence belongs to the class-I aminoacyl-tRNA synthetase family. ValS type 1 subfamily. As to quaternary structure, monomer.

The protein resides in the cytoplasm. The enzyme catalyses tRNA(Val) + L-valine + ATP = L-valyl-tRNA(Val) + AMP + diphosphate. Functionally, catalyzes the attachment of valine to tRNA(Val). As ValRS can inadvertently accommodate and process structurally similar amino acids such as threonine, to avoid such errors, it has a 'posttransfer' editing activity that hydrolyzes mischarged Thr-tRNA(Val) in a tRNA-dependent manner. The chain is Valine--tRNA ligase from Rhodopseudomonas palustris (strain ATCC BAA-98 / CGA009).